The following is a 318-amino-acid chain: Beta-ketoacyl-[acyl-carrier-protein] synthase III (318 aa).

Catalysis depends on residues C113 and H245. The segment at 246-250 is ACP-binding; it reads QANIR. The active site involves N275.

This sequence belongs to the thiolase-like superfamily. FabH family. As to quaternary structure, homodimer.

It localises to the cytoplasm. The catalysed reaction is malonyl-[ACP] + acetyl-CoA + H(+) = 3-oxobutanoyl-[ACP] + CO2 + CoA. It participates in lipid metabolism; fatty acid biosynthesis. Functionally, catalyzes the condensation reaction of fatty acid synthesis by the addition to an acyl acceptor of two carbons from malonyl-ACP. Catalyzes the first condensation reaction which initiates fatty acid synthesis and may therefore play a role in governing the total rate of fatty acid production. Possesses both acetoacetyl-ACP synthase and acetyl transacylase activities. Its substrate specificity determines the biosynthesis of branched-chain and/or straight-chain of fatty acids. This is Beta-ketoacyl-[acyl-carrier-protein] synthase III from Wolbachia pipientis wMel.